A 155-amino-acid chain; its full sequence is Protein E6 (155 aa).

Zinc fingers lie at residues 33–69 (CVYC…CRVC) and 106–142 (CYRC…CLQC).

It belongs to the papillomaviridae E6 protein family. In terms of assembly, forms homodimers. Interacts with ubiquitin-protein ligase UBE3A/E6-AP; this interaction stimulates UBE3A ubiquitin activity. Interacts with host TP53 and EP300; this interaction inhibits TP53 activity.

The protein localises to the host cytoplasm. The protein resides in the host nucleus. In terms of biological role, plays a major role in the induction and maintenance of cellular transformation. E6 associates with host UBE3A/E6-AP ubiquitin-protein ligase and modulates its activity. Sequesters tumor suppressor TP53 in the host cytoplasm and modulates its activity by interacting with host EP300 that results in the reduction of TP53 acetylation and activation. In turn, apoptosis induced by DNA damage is inhibited. E6 also protects host keratinocytes from apoptosis by mediating the degradation of host BAK1. May also inhibit host immune response. The protein is Protein E6 of Homo sapiens (Human).